Consider the following 318-residue polypeptide: Nucleotide-binding protein Jann_0539 (318 aa).

17–24 is an ATP binding site; it reads GPSGAGRS. Position 64–67 (64–67) interacts with GTP; it reads DPRT. Positions 278 to 318 are disordered; sequence GWQVSKRHRDVDKDASENSDRDRGASARTAASTDDGEAEQP. A compositionally biased stretch (basic and acidic residues) spans 286-302; sequence RDVDKDASENSDRDRGA.

The protein belongs to the RapZ-like family.

Functionally, displays ATPase and GTPase activities. This chain is Nucleotide-binding protein Jann_0539, found in Jannaschia sp. (strain CCS1).